Reading from the N-terminus, the 93-residue chain is Alpha-conotoxin-like Ms20.1 (93 aa).

The signal sequence occupies residues 1–23 (MLKLEMMLVVLLILPLFYFDAGG). The propeptide occupies 24–45 (QVVQRDWRSDGLARYLQRGDRD). At Glu48 the chain carries 4-carboxyglutamate. At Pro54 the chain carries 4-hydroxyproline. 4 disulfide bridges follow: Cys62–Cys71, Cys67–Cys79, Cys72–Cys89, and Cys77–Cys91.

The protein belongs to the conotoxin D superfamily. As to quaternary structure, hetero-, homo- or pseudo-homodimer (identical sequence, different post-translational modifications). Heterodimer of [carboxyGlu-48, hydroxyPro-54]Ms20.1 and [carboxy'Glu-50', hydroxy'Pro-56']Ms20.4 may exist. In terms of tissue distribution, expressed by the venom duct.

It is found in the secreted. Its function is as follows. Alpha-conotoxins act on postsynaptic membranes, they bind to the nicotinic acetylcholine receptors (nAChR) and thus inhibit them. Through its two C-terminal domains, this homodimeric protein would bind to two nAChR allosteric sites, located outside the nAChR C-loop of the principal binding face and at the adjacent binding interface in a clockwise direction. This toxin specifically blocks mammalian neuronal nAChR of the alpha-7/CHRNA7, alpha-3-beta-2/CHRNA3-CHRNB2 and alpha-4-beta-2/CHRNA4-CHRNB2 subtypes. This is Alpha-conotoxin-like Ms20.1 from Conus mustelinus (Weasel cone).